A 276-amino-acid chain; its full sequence is Large ribosomal subunit protein uL2 (276 aa).

Disordered stretches follow at residues 34–55 (LQPL…RHQG) and 221–276 (RGSV…RRTK). A compositionally biased stretch (polar residues) spans 37–48 (LKNNAGRNNNGR).

The protein belongs to the universal ribosomal protein uL2 family. Part of the 50S ribosomal subunit. Forms a bridge to the 30S subunit in the 70S ribosome.

One of the primary rRNA binding proteins. Required for association of the 30S and 50S subunits to form the 70S ribosome, for tRNA binding and peptide bond formation. It has been suggested to have peptidyltransferase activity; this is somewhat controversial. Makes several contacts with the 16S rRNA in the 70S ribosome. The polypeptide is Large ribosomal subunit protein uL2 (Enterococcus faecalis (strain ATCC 700802 / V583)).